We begin with the raw amino-acid sequence, 396 residues long: Phosphoglycerate kinase (396 aa).

Substrate-binding positions include 21–23, Arg-37, 60–63, Arg-121, and Arg-154; these read DFN and HLGR. Residues Lys-205, Gly-296, Glu-327, and 353–356 each bind ATP; that span reads GGDS.

This sequence belongs to the phosphoglycerate kinase family. In terms of assembly, monomer.

The protein resides in the cytoplasm. It catalyses the reaction (2R)-3-phosphoglycerate + ATP = (2R)-3-phospho-glyceroyl phosphate + ADP. The protein operates within carbohydrate degradation; glycolysis; pyruvate from D-glyceraldehyde 3-phosphate: step 2/5. This Anaeromyxobacter dehalogenans (strain 2CP-1 / ATCC BAA-258) protein is Phosphoglycerate kinase.